A 320-amino-acid chain; its full sequence is Short-chain dehydrogenase TIC 32 A, chloroplastic (320 aa).

NADP(+) is bound by residues 40 to 46 (GGTSGIG), 92 to 93 (DL), Asn-119, and Thr-140. Ser-174 provides a ligand contact to substrate. Tyr-196 functions as the Proton acceptor in the catalytic mechanism. The tract at residues 301 to 317 (DTTLADKLWDFSIKLVE) is interaction with calmodulin.

Belongs to the short-chain dehydrogenases/reductases (SDR) family. Part of the Tic complex. Expressed in the dehiscence zone of developing pods.

The protein localises to the plastid. The protein resides in the chloroplast inner membrane. Its function is as follows. Involved in protein precursor import into chloroplasts. Maybe involved in pod abscission or dehiscence (pod shatter). This is Short-chain dehydrogenase TIC 32 A, chloroplastic from Brassica napus (Rape).